The following is a 188-amino-acid chain: HTH-type transcriptional repressor AcnR (188 aa).

The 61-residue stretch at 10 to 70 (VNSRQEILEG…ALAREDAARM (61 aa)) folds into the HTH tetR-type domain. A DNA-binding region (H-T-H motif) is located at residues 33–52 (TVRRLEEATGKSRGAIFHHF). Citrate-binding positions include 79 to 80 (LV), arginine 130, and asparagine 134. Glutamate 181 is a Mg(2+) binding site. A citrate-binding site is contributed by arginine 185.

Homodimer.

Functionally, acnR negatively controls the expression of the aconitase gene acn. The protein is HTH-type transcriptional repressor AcnR of Corynebacterium efficiens (strain DSM 44549 / YS-314 / AJ 12310 / JCM 11189 / NBRC 100395).